The following is a 1834-amino-acid chain: MASSSLPNLVPLGPESLRPFTRASLAAIERRALEEEARLQRNKQMEIQETERNARSDLEAGKNLPLIYGDPPPEVIGIPLEDLDPYYSNKKTFIVLNKGKAIFRFSATPALYMLSPFSIIRRSAIKVLIHSLFSMFIMITILPNCVVMTMSDPPPWPIHVENTFTGINTFESLIKMLARGFCIDDFTFLRDPWNWLDFSVIMMAYLTEFVDLGNISALRTFRVLRALKTITVIPGLKTIVGALIQSVKKLSDVMILTVFCLSVFALVGLQLFMGNLRQKCVRWPQPFNDTNTTWYGNDTWYSNDTWNSNDTWSSNDMWNSHESMASNYTFDWDAYINDEGNFYFLEGAKDALLCGNSSDAGHCPEGYKCIKTGRNPNYGYTSHDTFSWAFLALFRLMIQDYWENLFQLTLRAAGKTYMIFFVVIIFLGSFYLINLILAVVTMAYAEQNEATLAEDQEKEEEFQQMMEKFQKQQEELEKAKADQALEGGEAGGDPAHSKDCNGSLDTSPGEKGPPRQSCSADSGVSDAMEELEEAHQKCPPWWYKCAHKVLIWNCCTPWVKFKNIIHLIVMDPFVDLGITICIVLNTLFMAMEHYPMTEHFDKVLTVGNLVFTGIFTAEMVLKLIALDPYEYFQQGWNVFDSIIVTLSWVELGLVNVKGLSVLRSFRLVRSLKLAKSWPTLNMFIRIIGNSGGGLGNLTLVLAIIVVNFSVVGMQLFGKNYKECVCKNASDCALPRWKMCDFFHSFLIVLRILCGEWIEPMWGFMEVAGQAMFLTVLLMVMVNGNLVDLDLFLALLLNPLNSDNLSASDEDGEMNNLQISSWPIKLGICFANAFLLGLLHGKILSPKDIMLSLGDPGEAGEAGEAEESAPEDEKKEPPPEDDDKDLKKDNHILNHMGLVDGTPTSIELDHLNFINNPYLTIHVPIASEESDLEMPTEEETDTFSEPEDGKKPLQPLDGNSSVCSTADYKPPEEDPEEQAEENPEGEQPEECFTEACVQRFPCLSVDISQGRGKMWWTLRRACFKIVEHHWFKTFNSSLILLNSGTLAFEDIYIEQRRVIRTILEYADKVFTYIFIMEMLLKWVAYGFKVYFTNAWCWLDFLIVDVSIISLVANWLGYSELGPIKSLRTLRALRPLRALSRFEGMRVVVNALLGAIPSIMNVLLVCLIFWVIFSIMGVNLFAAKIYYFINTTTSERFDISGVNNKSECESLIHTGQVRWLNVKVNYDNVGLGYLSLLQVATFKGWMDIMYSAVDSREQEEQPQYEVNIYMYLYFVIFIIFGSFFTINSLIRLIIVNFNQQKKKLGGKDIFMTEEQKKYYNAMKKLGSKKPQKPIPRPQNKIQGMVYDFVTKQVFDITIMILICLNMVTMMVETDDQSQLKVDILYNINMVFIIVFTGECVLKMFALRQNYFTVGWNIFDFVVVILSIVGLALSDLIQKYFVSPTLFRVIRLARIGRVLRLIRGAKGIRTLLFALMMSLPALFNIGLLLILVMFIYSIFGMSNFAYVKKESGIDDMFNFETFGNSIICLFEITTSAGWDGLLNPILNSGPPDCDPTLENPGTSVRGDCGNPSIGICFFCSYIIISFLIVVNMYIAIILENFNVATEESSDPLGEDDFEIFFEKWEKFGPDATQFIDYSRLSDFVDTLQEPLRIAKPNKIKLITLDLPMVPGDKIHCLDILFALTKEVLGDSGEMDALKETMEEKFMAANPSKVSYEPITTTLKRKQEEVCAIKIQRAYRRHLLQRSVKQASYMYRHSQDGSGDGAPEKEGLIANTMSKMYGRENGNSGVQNKGEERGSTGDAGPTMGLTPINPSDSALPPSPPPGLPLHPGVKESLV.

Residues 1-131 (MASSSLPNLV…RSAIKVLIHS (131 aa)) are Cytoplasmic-facing. The I repeat unit spans residues 113–448 (MLSPFSIIRR…VVTMAYAEQN (336 aa)). The chain crosses the membrane as a helical span at residues 132–150 (LFSMFIMITILPNCVVMTM). The Extracellular segment spans residues 151–157 (SDPPPWP). Residues 158-178 (IHVENTFTGINTFESLIKMLA) form a helical membrane-spanning segment. The Cytoplasmic segment spans residues 179 to 192 (RGFCIDDFTFLRDP). The helical transmembrane segment at 193-210 (WNWLDFSVIMMAYLTEFV) threads the bilayer. Over 211 to 216 (DLGNIS) the chain is Extracellular. Asparagine 214 is a glycosylation site (N-linked (GlcNAc...) asparagine). A helical transmembrane segment spans residues 217 to 233 (ALRTFRVLRALKTITVI). Over 234–252 (PGLKTIVGALIQSVKKLSD) the chain is Cytoplasmic. The helical transmembrane segment at 253–272 (VMILTVFCLSVFALVGLQLF) threads the bilayer. Topologically, residues 273-385 (MGNLRQKCVR…PNYGYTSHDT (113 aa)) are extracellular. Cysteine 280 and cysteine 354 are joined by a disulfide. Residues asparagine 288, asparagine 291, asparagine 297, asparagine 303, asparagine 309, asparagine 327, and asparagine 356 are each glycosylated (N-linked (GlcNAc...) asparagine). Cysteines 363 and 369 form a disulfide. The pore-forming intramembrane region spans 386 to 410 (FSWAFLALFRLMIQDYWENLFQLTL). Over 411–417 (RAAGKTY) the chain is Extracellular. A helical membrane pass occupies residues 418-438 (MIFFVVIIFLGSFYLINLILA). Over 439-572 (VVTMAYAEQN…NIIHLIVMDP (134 aa)) the chain is Cytoplasmic. Residues 486 to 525 (EGGEAGGDPAHSKDCNGSLDTSPGEKGPPRQSCSADSGVS) form a disordered region. One copy of the II repeat lies at 554–826 (CCTPWVKFKN…QISSWPIKLG (273 aa)). Residues 573–591 (FVDLGITICIVLNTLFMAM) traverse the membrane as a helical segment. Topologically, residues 592-602 (EHYPMTEHFDK) are extracellular. The chain crosses the membrane as a helical span at residues 603 to 622 (VLTVGNLVFTGIFTAEMVLK). Topologically, residues 623 to 636 (LIALDPYEYFQQGW) are cytoplasmic. Residues 637 to 656 (NVFDSIIVTLSWVELGLVNV) form a helical membrane-spanning segment. The Extracellular portion of the chain corresponds to 657-658 (KG). Residues 659–676 (LSVLRSFRLVRSLKLAKS) form a helical membrane-spanning segment. The Cytoplasmic portion of the chain corresponds to 677 to 692 (WPTLNMFIRIIGNSGG). A helical membrane pass occupies residues 693–711 (GLGNLTLVLAIIVVNFSVV). The Extracellular portion of the chain corresponds to 712–740 (GMQLFGKNYKECVCKNASDCALPRWKMCD). Cysteine 725 and cysteine 731 are joined by a disulfide. The pore-forming intramembrane region spans 741–761 (FFHSFLIVLRILCGEWIEPMW). Topologically, residues 762–772 (GFMEVAGQAMF) are extracellular. Residues 773–791 (LTVLLMVMVNGNLVDLDLF) form a helical membrane-spanning segment. Topologically, residues 792–1029 (LALLLNPLNS…ACFKIVEHHW (238 aa)) are cytoplasmic. Disordered stretches follow at residues 853–886 (GDPG…KDLK) and 929–989 (SDLE…QPEE). Acidic residues predominate over residues 860-869 (EAGEAEESAP). Basic and acidic residues predominate over residues 870 to 886 (EDEKKEPPPEDDDKDLK). 2 stretches are compositionally biased toward acidic residues: residues 929–945 (SDLE…FSEP) and 972–989 (EDPE…QPEE). The stretch at 1010 to 1323 (RGKMWWTLRR…KKYYNAMKKL (314 aa)) is one III repeat. Residues 1030-1047 (FKTFNSSLILLNSGTLAF) traverse the membrane as a helical segment. At 1048-1060 (EDIYIEQRRVIRT) the chain is on the extracellular side. Residues 1061-1079 (ILEYADKVFTYIFIMEMLL) form a helical membrane-spanning segment. Topologically, residues 1080 to 1093 (KWVAYGFKVYFTNA) are cytoplasmic. A helical transmembrane segment spans residues 1094–1112 (WCWLDFLIVDVSIISLVAN). Residues 1113–1120 (WLGYSELG) lie on the Extracellular side of the membrane. The helical transmembrane segment at 1121-1139 (PIKSLRTLRALRPLRALSR) threads the bilayer. Residues 1140-1156 (FEGMRVVVNALLGAIPS) lie on the Cytoplasmic side of the membrane. Residues 1157 to 1176 (IMNVLLVCLIFWVIFSIMGV) form a helical membrane-spanning segment. The Extracellular segment spans residues 1177–1227 (NLFAAKIYYFINTTTSERFDISGVNNKSECESLIHTGQVRWLNVKVNYDNV). 2 N-linked (GlcNAc...) asparagine glycosylation sites follow: asparagine 1188 and asparagine 1202. The pore-forming intramembrane region spans 1228-1249 (GLGYLSLLQVATFKGWMDIMYS). The Extracellular portion of the chain corresponds to 1250–1266 (AVDSREQEEQPQYEVNI). The helical transmembrane segment at 1267 to 1288 (YMYLYFVIFIIFGSFFTINSLI) threads the bilayer. Residues 1289-1351 (RLIIVNFNQQ…MVYDFVTKQV (63 aa)) are Cytoplasmic-facing. The segment at 1307 to 1309 (IFM) is important for rapid channel inactivation. An IV repeat occupies 1332–1630 (IPRPQNKIQG…WEKFGPDATQ (299 aa)). A helical membrane pass occupies residues 1352-1369 (FDITIMILICLNMVTMMV). Residues 1370–1380 (ETDDQSQLKVD) are Extracellular-facing. Residues 1381–1399 (ILYNINMVFIIVFTGECVL) traverse the membrane as a helical segment. The Cytoplasmic portion of the chain corresponds to 1400 to 1411 (KMFALRQNYFTV). Residues 1412–1429 (GWNIFDFVVVILSIVGLA) form a helical membrane-spanning segment. Residues 1430–1442 (LSDLIQKYFVSPT) lie on the Extracellular side of the membrane. A helical membrane pass occupies residues 1443 to 1459 (LFRVIRLARIGRVLRLI). The Cytoplasmic portion of the chain corresponds to 1460-1478 (RGAKGIRTLLFALMMSLPA). Residues 1479-1496 (LFNIGLLLILVMFIYSIF) form a helical membrane-spanning segment. Topologically, residues 1497-1518 (GMSNFAYVKKESGIDDMFNFET) are extracellular. The pore-forming intramembrane region spans 1519–1541 (FGNSIICLFEITTSAGWDGLLNP). Residues 1542 to 1571 (ILNSGPPDCDPTLENPGTSVRGDCGNPSIG) lie on the Extracellular side of the membrane. A disulfide bridge links cysteine 1550 with cysteine 1565. Residues 1572–1594 (ICFFCSYIIISFLIVVNMYIAII) form a helical membrane-spanning segment. Residues 1595-1834 (LENFNVATEE…LHPGVKESLV (240 aa)) are Cytoplasmic-facing. One can recognise an IQ domain in the interval 1724-1753 (EEVCAIKIQRAYRRHLLQRSVKQASYMYRH). The interval 1776-1834 (MYGRENGNSGVQNKGEERGSTGDAGPTMGLTPINPSDSALPPSPPPGLPLHPGVKESLV) is disordered.

This sequence belongs to the sodium channel (TC 1.A.1.10) family. Nav1.4/SCN4A subfamily. The Nav1.4 voltage-gated sodium channel consists of an ion-conducting alpha subunit SCN4A which is functional on its own and a regulatory beta subunit SCN1B. SCN1B strongly enhances the presence of SCN4A at the cell surface. SCN1B is also required for rapid channel inactivation and recovery after inactivation. It prevents the decrease of channel activity in response to repetitive, high-frequency depolarizations. Interacts with the syntrophins SNTA1, SNTB1 and SNTB2 (via PDZ domain); probably links SCN4A to the actin cytoskeleton and the extracellular matrix via the dystrophin-associated protein complex and regulates its localization in muscle cells. Interacts with TMEM233; probable regulator of the channel.

It is found in the cell membrane. It carries out the reaction Na(+)(in) = Na(+)(out). Pore-forming subunit of Nav1.4, a voltage-gated sodium (Nav) channel that directly mediates the depolarizing phase of action potentials in excitable membranes. Navs, also called VGSCs (voltage-gated sodium channels) or VDSCs (voltage-dependent sodium channels), operate by switching between closed and open conformations depending on the voltage difference across the membrane. In the open conformation they allow Na(+) ions to selectively pass through the pore, along their electrochemical gradient. The influx of Na+ ions provokes membrane depolarization, initiating the propagation of electrical signals throughout cells and tissues. Highly expressed in skeletal muscles, Nav1.4 generates the action potential crucial for muscle contraction. The chain is Sodium channel protein type 4 subunit alpha from Equus caballus (Horse).